The sequence spans 186 residues: Elongation factor P (186 aa).

The protein belongs to the elongation factor P family.

The protein localises to the cytoplasm. Its pathway is protein biosynthesis; polypeptide chain elongation. Its function is as follows. Involved in peptide bond synthesis. Stimulates efficient translation and peptide-bond synthesis on native or reconstituted 70S ribosomes in vitro. Probably functions indirectly by altering the affinity of the ribosome for aminoacyl-tRNA, thus increasing their reactivity as acceptors for peptidyl transferase. The chain is Elongation factor P from Cupriavidus pinatubonensis (strain JMP 134 / LMG 1197) (Cupriavidus necator (strain JMP 134)).